Consider the following 1570-residue polypeptide: Mediator of RNA polymerase II transcription subunit 1 (1570 aa).

2 consecutive short sequence motifs (LXXLL motif) follow at residues 585–589 (LTSLL) and 626–630 (LMNLL). Disordered stretches follow at residues 592–687 (TNNT…TEDD), 771–880 (SKLS…FKDF), and 922–1561 (SKTL…MDDD). Residues 675–687 (TGAEKMKNQTEDD) are compositionally biased toward basic and acidic residues. Polar residues-rich tracts occupy residues 788-801 (RDSSSSGHSQSTLF), 832-861 (GSPNSDSPNTFFNSVDFNPDLLNSQSQSGF), and 931-942 (QETQSRSQSPLL). Positions 946 to 958 (LGKDRPQKQKVKE) are enriched in basic and acidic residues. A compositionally biased stretch (gly residues) spans 961 to 970 (NGGGAGGGLS). 5 stretches are compositionally biased toward low complexity: residues 1022-1035 (PTSTGGSKSPGTSG), 1066-1082 (SSHGQYSSSGSSSSSSS), 1089-1113 (SSLSSSASGKIKSNKSDGSSGMKIG), 1121-1140 (SGQSGQSSSQSKNSSQSMGK), and 1152-1161 (SSNVSNSSGS). Polar residues predominate over residues 1173 to 1190 (MNPSLSKPNISPSHSRPS). Residues 1217–1228 (GSGGQHLSGGGS) show a composition bias toward gly residues. Residues 1229-1271 (NSTTKSSSGLVSSGSLSQKPNSSSSSSSSSSSSSSSSSSSSSS) are compositionally biased toward low complexity. A compositionally biased stretch (polar residues) spans 1276–1287 (VSQNLHGNSKGK). The segment covering 1308-1328 (VGTGGPGSEDPMDGGGGGGST) has biased composition (gly residues). Residues 1347 to 1359 (PTKREKSEKDKSK) are compositionally biased toward basic and acidic residues. Polar residues-rich tracts occupy residues 1418 to 1433 (SQMQKNYGSPLISGST) and 1441 to 1455 (PSHNKSPAYTPQALD). The span at 1459–1469 (ESGSSSIAEKS) shows a compositional bias: low complexity. Positions 1494–1503 (KHKKHKKEKK) are enriched in basic residues. Residues 1504 to 1516 (RLKDKDRDREKKK) show a composition bias toward basic and acidic residues. The span at 1536–1546 (MAMSGGSMMSS) shows a compositional bias: low complexity.

Belongs to the Mediator complex subunit 1 family. In terms of assembly, component of the Mediator complex.

The protein resides in the nucleus. Its function is as follows. Component of the Mediator complex, a coactivator involved in the regulated transcription of nearly all RNA polymerase II-dependent genes. Mediator functions as a bridge to convey information from gene-specific regulatory proteins to the basal RNA polymerase II transcription machinery. Mediator is recruited to promoters by direct interactions with regulatory proteins and serves as a scaffold for the assembly of a functional preinitiation complex with RNA polymerase II and the general transcription factors. This is Mediator of RNA polymerase II transcription subunit 1 (med1) from Xenopus laevis (African clawed frog).